A 224-amino-acid chain; its full sequence is Redox-sensing transcriptional repressor Rex (224 aa).

Residues 17–56 (RYHRYLEELLKNDVKRISSRELSEKMGVTASQIRQDLNNF) constitute a DNA-binding region (H-T-H motif). 91-96 (GAGNLG) lines the NAD(+) pocket.

This sequence belongs to the transcriptional regulatory Rex family. As to quaternary structure, homodimer.

The protein resides in the cytoplasm. Functionally, modulates transcription in response to changes in cellular NADH/NAD(+) redox state. This Thermoanaerobacter sp. (strain X514) protein is Redox-sensing transcriptional repressor Rex.